Here is a 398-residue protein sequence, read N- to C-terminus: Chalcone synthase (398 aa).

Cys169 is an active-site residue.

It belongs to the thiolase-like superfamily. Chalcone/stilbene synthases family.

It catalyses the reaction (E)-4-coumaroyl-CoA + 3 malonyl-CoA + 3 H(+) = 2',4,4',6'-tetrahydroxychalcone + 3 CO2 + 4 CoA. It participates in secondary metabolite biosynthesis; flavonoid biosynthesis. In terms of biological role, the primary product of this enzyme is 4,2',4',6'-tetrahydroxychalcone (also termed naringenin-chalcone or chalcone) which can under specific conditions spontaneously isomerize into naringenin. This is Chalcone synthase (CHS) from Petroselinum crispum (Parsley).